We begin with the raw amino-acid sequence, 101 residues long: Trp operon repressor homolog (101 aa).

Residues 59–82 (QREIQQNLNTSAATITRGSNMLKL) mediate DNA binding.

Belongs to the TrpR family. Homodimer.

It localises to the cytoplasm. Its function is as follows. This protein is an aporepressor. When complexed with L-tryptophan it binds the operator region of the trp operon and prevents the initiation of transcription. In Mannheimia succiniciproducens (strain KCTC 0769BP / MBEL55E), this protein is Trp operon repressor homolog.